The sequence spans 283 residues: 4-diphosphocytidyl-2-C-methyl-D-erythritol kinase (283 aa).

Residue lysine 10 is part of the active site. Residue 99 to 109 (PMGGGLGGGSS) participates in ATP binding. Aspartate 141 is an active-site residue.

It belongs to the GHMP kinase family. IspE subfamily. In terms of assembly, homodimer.

It carries out the reaction 4-CDP-2-C-methyl-D-erythritol + ATP = 4-CDP-2-C-methyl-D-erythritol 2-phosphate + ADP + H(+). It functions in the pathway isoprenoid biosynthesis; isopentenyl diphosphate biosynthesis via DXP pathway; isopentenyl diphosphate from 1-deoxy-D-xylulose 5-phosphate: step 3/6. Catalyzes the phosphorylation of the position 2 hydroxy group of 4-diphosphocytidyl-2C-methyl-D-erythritol. This Salmonella choleraesuis (strain SC-B67) protein is 4-diphosphocytidyl-2-C-methyl-D-erythritol kinase.